The sequence spans 361 residues: Chorismate synthase (361 aa).

R48 contacts NADP(+). FMN is bound by residues 126-128, G286, 301-305, and R328; these read RFS and KPTPS.

It belongs to the chorismate synthase family. FMNH2 is required as a cofactor.

The enzyme catalyses 5-O-(1-carboxyvinyl)-3-phosphoshikimate = chorismate + phosphate. The protein operates within metabolic intermediate biosynthesis; chorismate biosynthesis; chorismate from D-erythrose 4-phosphate and phosphoenolpyruvate: step 7/7. Functionally, catalyzes the anti-1,4-elimination of the C-3 phosphate and the C-6 proR hydrogen from 5-enolpyruvylshikimate-3-phosphate (EPSP) to yield chorismate, which is the branch point compound that serves as the starting substrate for the three terminal pathways of aromatic amino acid biosynthesis. This reaction introduces a second double bond into the aromatic ring system. In Korarchaeum cryptofilum (strain OPF8), this protein is Chorismate synthase.